Here is a 168-residue protein sequence, read N- to C-terminus: MPLLDSFKVDHTRMNAPAVRIAKTMQTPKGDNITVFDLRFCIPNKEILSSKGIHTLEHLFAGFMRDHLNNEQVEIIDISPMGCRTGFYMSLIGTPNEQQVAEAWLISMQDILNIKNQDEIPELNEYQCGTYTEHSLEEAQNIAQNILHRGVGINKNEDLLLDDNLLNS.

Fe cation is bound by residues histidine 54, histidine 58, and cysteine 128.

This sequence belongs to the LuxS family. As to quaternary structure, homodimer. Requires Fe cation as cofactor.

The enzyme catalyses S-(5-deoxy-D-ribos-5-yl)-L-homocysteine = (S)-4,5-dihydroxypentane-2,3-dione + L-homocysteine. Functionally, involved in the synthesis of autoinducer 2 (AI-2) which is secreted by bacteria and is used to communicate both the cell density and the metabolic potential of the environment. The regulation of gene expression in response to changes in cell density is called quorum sensing. Catalyzes the transformation of S-ribosylhomocysteine (RHC) to homocysteine (HC) and 4,5-dihydroxy-2,3-pentadione (DPD). The sequence is that of S-ribosylhomocysteine lyase from Histophilus somni (strain 129Pt) (Haemophilus somnus).